Consider the following 46-residue polypeptide: TGAQSLSIVAPLDVLRQRLMNELNRRRMRELQGSRIQQNRQLLTSI.

Isoleucine amide is present on Ile-46.

Belongs to the sauvagine/corticotropin-releasing factor/urotensin I family.

Its subcellular location is the secreted. In terms of biological role, regulation of fluid secretion. Stimulates primary urine secretion by Malpighian tubules and causes a dose-dependent stimulation of cAMP levels in the tubules. This chain is Diuretic hormone, found in Acheta domesticus (House cricket).